Consider the following 299-residue polypeptide: MTDAPVSRCGYVAIVGRPNVGKSTLLNHILGQKLAITSRKPQTTRHNMLGIKTEGEIQAVYVDTPGLHKHNDKALNRYMNRSASSALKDVDVVVFVVDRTRWTDEDQLVLEKVQHVKCPILLAVNKADRLEDKSELLPHLNWLAEQLPQAEIVPISALQGQNLDTLEKLVGERLPESEHFYPEDQITDRSSRFLAAELIREKIMRQLGAELPYQITVEIEEFKQDGPILHIHGLILVERDGQKKIIIGDKGERIKRIGQDARKDMETMFDSKVMLNLWVKVKGGWSDDERALRSLGYLD.

The region spanning 8-176 (RCGYVAIVGR…EKLVGERLPE (169 aa)) is the Era-type G domain. The tract at residues 16–23 (GRPNVGKS) is G1. 16–23 (GRPNVGKS) contributes to the GTP binding site. A G2 region spans residues 42 to 46 (QTTRH). A G3 region spans residues 63-66 (DTPG). GTP is bound by residues 63–67 (DTPGL) and 125–128 (NKAD). A G4 region spans residues 125–128 (NKAD). The G5 stretch occupies residues 155–157 (ISA). The KH type-2 domain occupies 199-283 (IREKIMRQLG…MLNLWVKVKG (85 aa)).

This sequence belongs to the TRAFAC class TrmE-Era-EngA-EngB-Septin-like GTPase superfamily. Era GTPase family. Monomer.

The protein resides in the cytoplasm. It localises to the cell inner membrane. Functionally, an essential GTPase that binds both GDP and GTP, with rapid nucleotide exchange. Plays a role in 16S rRNA processing and 30S ribosomal subunit biogenesis and possibly also in cell cycle regulation and energy metabolism. This is GTPase Era from Ectopseudomonas mendocina (strain ymp) (Pseudomonas mendocina).